Reading from the N-terminus, the 399-residue chain is Probable 3-ketosteroid-9-alpha-monooxygenase, oxygenase component (399 aa).

Residues 26–128 (WHCLGLVRDF…VAEVSGQLFV (103 aa)) enclose the Rieske domain. Residues C67, H69, C86, and H89 each coordinate [2Fe-2S] cluster. Positions 175, 181, 186, and 307 each coordinate Fe cation.

In terms of assembly, homotrimer. The two-component system 3-ketosteroid-9-alpha-monooxygenase is composed of an oxygenase component KshA and a reductase component KshB. [2Fe-2S] cluster is required as a cofactor. The cofactor is Fe cation.

Functionally, could catalyze the introduction of a 9alpha-hydroxyl moiety into the ring B of 3-ketosteroid substrates. The sequence is that of Probable 3-ketosteroid-9-alpha-monooxygenase, oxygenase component from Rhodococcus rhodochrous.